We begin with the raw amino-acid sequence, 202 residues long: Imidazoleglycerol-phosphate dehydratase (202 aa).

This sequence belongs to the imidazoleglycerol-phosphate dehydratase family.

The protein resides in the cytoplasm. It carries out the reaction D-erythro-1-(imidazol-4-yl)glycerol 3-phosphate = 3-(imidazol-4-yl)-2-oxopropyl phosphate + H2O. Its pathway is amino-acid biosynthesis; L-histidine biosynthesis; L-histidine from 5-phospho-alpha-D-ribose 1-diphosphate: step 6/9. This Mycolicibacterium gilvum (strain PYR-GCK) (Mycobacterium gilvum (strain PYR-GCK)) protein is Imidazoleglycerol-phosphate dehydratase.